A 179-amino-acid chain; its full sequence is Large ribosomal subunit protein uL5 (179 aa).

Belongs to the universal ribosomal protein uL5 family. Part of the 50S ribosomal subunit; part of the 5S rRNA/L5/L18/L25 subcomplex. Contacts the 5S rRNA and the P site tRNA. Forms a bridge to the 30S subunit in the 70S ribosome.

Functionally, this is one of the proteins that bind and probably mediate the attachment of the 5S RNA into the large ribosomal subunit, where it forms part of the central protuberance. In the 70S ribosome it contacts protein S13 of the 30S subunit (bridge B1b), connecting the 2 subunits; this bridge is implicated in subunit movement. Contacts the P site tRNA; the 5S rRNA and some of its associated proteins might help stabilize positioning of ribosome-bound tRNAs. This Natranaerobius thermophilus (strain ATCC BAA-1301 / DSM 18059 / JW/NM-WN-LF) protein is Large ribosomal subunit protein uL5.